We begin with the raw amino-acid sequence, 209 residues long: Chaperone protein TorD (209 aa).

The protein belongs to the TorD/DmsD family. TorD subfamily.

It localises to the cytoplasm. Its function is as follows. Involved in the biogenesis of TorA. Acts on TorA before the insertion of the molybdenum cofactor and, as a result, probably favors a conformation of the apoenzyme that is competent for acquiring the cofactor. The polypeptide is Chaperone protein TorD (Shewanella sp. (strain MR-4)).